The chain runs to 552 residues: MTPADLADLLRATAAKVLAERGLDPAVLPDEVTVERPRNPEHGDYATNLAMKVAKKAGTNPRDLAGWLAEALGAADGITSAEVAGPGFLNIRLAAAAQGAVLEQVLAAGSGYGTADTLRGTKINLEFVSANPTGPIHLGGTRWASVGDALGRILAAQGADVTREYYFNDHGAQIDRFANSLVAAATGQPTPDDGYAGAYIGEIAEQIVAEHPEAPTLPADQRHELFRAEGVELMFAHIKRTLHEFGTDFDVYFNESTLFASGAVEQAVETLKASGDLYEKDGAWWIASSEYGDDQDRVVIKSDGNAAYIAGDIAYFQNKRSRGFDLCIYMLGADHHGYIGRLKAAAAAFGDDPATVEVLIGQMVNLVRDGQAVKMSKRAGTVVTLDDLVEAIGVDAARYALVRWSVNSSVDIDLNLWTSQKNENPVYYVQYAHARTASIGRNAAAFDYASVTPDLSQLTAEEEGELIRTIGEYPRVVASAASLREPHRVARYLEELAGAYHRFQTNSKLRVLPLGDDPVSPLNAARLVLVNATRQVLANGLALLGVSAPEQM.

The 'HIGH' region signature appears at 130–140 (ANPTGPIHLGG).

It belongs to the class-I aminoacyl-tRNA synthetase family. In terms of assembly, monomer.

The protein resides in the cytoplasm. The enzyme catalyses tRNA(Arg) + L-arginine + ATP = L-arginyl-tRNA(Arg) + AMP + diphosphate. This Nocardia farcinica (strain IFM 10152) protein is Arginine--tRNA ligase.